We begin with the raw amino-acid sequence, 841 residues long: Probable alpha-glucuronidase A (841 aa).

Residues 1–19 (MLRLPLVLVWSLWASLTVA) form the signal peptide. Asparagine 50, asparagine 104, asparagine 223, asparagine 280, asparagine 311, asparagine 344, asparagine 466, asparagine 528, asparagine 577, asparagine 683, asparagine 724, and asparagine 733 each carry an N-linked (GlcNAc...) asparagine glycan.

The protein belongs to the glycosyl hydrolase 67 family.

It is found in the secreted. The catalysed reaction is an alpha-D-glucuronoside + H2O = D-glucuronate + an alcohol. Alpha-glucuronidase involved in the hydrolysis of xylan, a major structural heterogeneous polysaccharide found in plant biomass representing the second most abundant polysaccharide in the biosphere, after cellulose. Releases 4-O-methylglucuronic acid from xylan. This Aspergillus terreus (strain NIH 2624 / FGSC A1156) protein is Probable alpha-glucuronidase A (aguA).